The primary structure comprises 384 residues: 8-amino-7-oxononanoate synthase (384 aa).

Position 21 (Arg-21) interacts with substrate. 108-109 contacts pyridoxal 5'-phosphate; that stretch reads GF. A substrate-binding site is contributed by His-133. 3 residues coordinate pyridoxal 5'-phosphate: Ser-179, His-207, and Thr-233. At Lys-236 the chain carries N6-(pyridoxal phosphate)lysine. A substrate-binding site is contributed by Thr-352.

Belongs to the class-II pyridoxal-phosphate-dependent aminotransferase family. BioF subfamily. Homodimer. Pyridoxal 5'-phosphate serves as cofactor.

The enzyme catalyses 6-carboxyhexanoyl-[ACP] + L-alanine + H(+) = (8S)-8-amino-7-oxononanoate + holo-[ACP] + CO2. It functions in the pathway cofactor biosynthesis; biotin biosynthesis. In terms of biological role, catalyzes the decarboxylative condensation of pimeloyl-[acyl-carrier protein] and L-alanine to produce 8-amino-7-oxononanoate (AON), [acyl-carrier protein], and carbon dioxide. The sequence is that of 8-amino-7-oxononanoate synthase from Shigella flexneri serotype 5b (strain 8401).